Reading from the N-terminus, the 139-residue chain is MLRTMFKSKIHRATVTQADLHYVGSVTIDADLLDAADLLPGELVHIVDITNGARLETYVIEGERGSGVVGINGAAAHLVHPGDLVIIISYAQVSDAEARALRPRVVHVDRDNRVVALGADPAEPVPGSDQARSPQAVTA.

The Schiff-base intermediate with substrate; via pyruvic acid role is filled by Ser25. Ser25 is modified (pyruvic acid (Ser)). Residue Thr57 coordinates substrate. Tyr58 (proton donor) is an active-site residue. Residue 73-75 (GAA) coordinates substrate. The interval 117–139 (LGADPAEPVPGSDQARSPQAVTA) is disordered. Residues 130–139 (QARSPQAVTA) show a composition bias toward polar residues.

This sequence belongs to the PanD family. In terms of assembly, heterooctamer of four alpha and four beta subunits. Pyruvate serves as cofactor. In terms of processing, is synthesized initially as an inactive proenzyme, which is activated by self-cleavage at a specific serine bond to produce a beta-subunit with a hydroxyl group at its C-terminus and an alpha-subunit with a pyruvoyl group at its N-terminus.

The protein localises to the cytoplasm. It catalyses the reaction L-aspartate + H(+) = beta-alanine + CO2. It participates in cofactor biosynthesis; (R)-pantothenate biosynthesis; beta-alanine from L-aspartate: step 1/1. In terms of biological role, catalyzes the pyruvoyl-dependent decarboxylation of aspartate to produce beta-alanine. The chain is Aspartate 1-decarboxylase from Streptomyces avermitilis (strain ATCC 31267 / DSM 46492 / JCM 5070 / NBRC 14893 / NCIMB 12804 / NRRL 8165 / MA-4680).